A 94-amino-acid chain; its full sequence is Immune protein Tsi6 (94 aa).

Immunity protein that plays a role in preventing early activation of toxin Tse6. This Pseudomonas aeruginosa (strain ATCC 15692 / DSM 22644 / CIP 104116 / JCM 14847 / LMG 12228 / 1C / PRS 101 / PAO1) protein is Immune protein Tsi6.